The following is a 284-amino-acid chain: Bifunctional protein FolD (284 aa).

Residues 164–166 (GRG), Ser189, and Ile230 contribute to the NADP(+) site.

Belongs to the tetrahydrofolate dehydrogenase/cyclohydrolase family. In terms of assembly, homodimer.

The catalysed reaction is (6R)-5,10-methylene-5,6,7,8-tetrahydrofolate + NADP(+) = (6R)-5,10-methenyltetrahydrofolate + NADPH. It catalyses the reaction (6R)-5,10-methenyltetrahydrofolate + H2O = (6R)-10-formyltetrahydrofolate + H(+). The protein operates within one-carbon metabolism; tetrahydrofolate interconversion. Catalyzes the oxidation of 5,10-methylenetetrahydrofolate to 5,10-methenyltetrahydrofolate and then the hydrolysis of 5,10-methenyltetrahydrofolate to 10-formyltetrahydrofolate. The polypeptide is Bifunctional protein FolD (Desulforamulus reducens (strain ATCC BAA-1160 / DSM 100696 / MI-1) (Desulfotomaculum reducens)).